A 48-amino-acid chain; its full sequence is Delta-stichotoxin-Hcr1e (48 aa).

Cystine bridges form between cysteine 3–cysteine 43, cysteine 5–cysteine 33, and cysteine 26–cysteine 44.

The protein belongs to the sea anemone sodium channel inhibitory toxin family. Type II subfamily.

The protein resides in the secreted. It is found in the nematocyst. Its function is as follows. Binds to site 3 of voltage-gated sodium channels and inhibits the inactivation process. The sequence is that of Delta-stichotoxin-Hcr1e from Radianthus crispa (Leathery sea anemone).